Consider the following 210-residue polypeptide: Large ribosomal subunit protein uL3 (210 aa).

The interval 126-152 is disordered; that stretch reads HGFRGGPKTHGQSDRHRAPGSIGAGTT.

It belongs to the universal ribosomal protein uL3 family. Part of the 50S ribosomal subunit. Forms a cluster with proteins L14 and L19.

Functionally, one of the primary rRNA binding proteins, it binds directly near the 3'-end of the 23S rRNA, where it nucleates assembly of the 50S subunit. The sequence is that of Large ribosomal subunit protein uL3 from Chloroflexus aurantiacus (strain ATCC 29366 / DSM 635 / J-10-fl).